The chain runs to 228 residues: Transcription termination/antitermination protein NusG (228 aa).

It belongs to the NusG family.

Participates in transcription elongation, termination and antitermination. The protein is Transcription termination/antitermination protein NusG of Mycobacterium leprae (strain TN).